A 365-amino-acid polypeptide reads, in one-letter code: Endophilin-B1 (365 aa).

Methionine 1 bears the N-acetylmethionine mark. Residues 1 to 30 (MNIMDFNVKKLAADAGTFLSRAVQFTEEKL) form a membrane-binding amphipathic helix region. The required for membrane binding stretch occupies residues 1 to 37 (MNIMDFNVKKLAADAGTFLSRAVQFTEEKLGQAEKTE). The region spanning 27–261 (EEKLGQAEKT…LGSFPSNYLS (235 aa)) is the BAR domain. Threonine 145 carries the post-translational modification Phosphothreonine; by CDK5. Residues 155-186 (YKTIAKERKLLQNKRLDLDAAKTRLKKAKAAE) adopt a coiled-coil conformation. In terms of domain architecture, SH3 spans 305 to 365 (SNNRKARVLY…VPITYLELLN (61 aa)).

It belongs to the endophilin family. In terms of assembly, homodimer, and heterodimer with SH3GLB2. Binds BAX; induction of apoptosis augments BAX binding. Binds DNM1, HTT, AMPH, BIN1 and ARFGAP1. Interacts with UVRAG; UVRAG bridges the interaction to BECN1 indicative for an association with the PI3K complex II (PI3KC3-C2). Isoform 3 interacts with PPP1CC; this interaction leads to the inhibition of phosphatase activity. Phosphorylated at Thr-145 by CDK5; this phosphorylation is required for autophagy induction in starved neurons and facilitates homodimerization. In terms of tissue distribution, isoform 1 is widely expressed. Isoform 2 is brain-specific. Isoform 3 is predominantly expressed in testis, but it is also detected in liver and, at much lower levels, in skin, stomach and ovary.

It localises to the cytoplasm. It is found in the golgi apparatus membrane. Its subcellular location is the mitochondrion outer membrane. The protein localises to the cytoplasmic vesicle. The protein resides in the autophagosome membrane. It localises to the midbody. May be required for normal outer mitochondrial membrane dynamics. Required for coatomer-mediated retrograde transport in certain cells. May recruit other proteins to membranes with high curvature. May promote membrane fusion. Involved in activation of caspase-dependent apoptosis by promoting BAX/BAK1 activation. Isoform 1 acts proapoptotic in fibroblasts. Involved in caspase-independent apoptosis during nutrition starvation and involved in the regulation of autophagy. Activates lipid kinase activity of PIK3C3 during autophagy probably by associating with the PI3K complex II (PI3KC3-C2). Associated with PI3KC3-C2 during autophagy may regulate the trafficking of ATG9A from the Golgi complex to the peripheral cytoplasm for the formation of autophagosomes by inducing Golgi membrane tubulation and fragmentation. Involved in regulation of degradative endocytic trafficking and cytokinesis, probably in the context of PI3KC3-C2. Isoform 2 acts antiapoptotic in neuronal cells; involved in maintenance of mitochondrial morphology and promotes neuronal viability. The polypeptide is Endophilin-B1 (Sh3glb1) (Mus musculus (Mouse)).